The sequence spans 130 residues: Small ribosomal subunit protein uS8 (130 aa).

The protein belongs to the universal ribosomal protein uS8 family. In terms of assembly, part of the 30S ribosomal subunit. Contacts proteins S5 and S12.

Its function is as follows. One of the primary rRNA binding proteins, it binds directly to 16S rRNA central domain where it helps coordinate assembly of the platform of the 30S subunit. This chain is Small ribosomal subunit protein uS8, found in Marinomonas sp. (strain MWYL1).